Here is a 242-residue protein sequence, read N- to C-terminus: Segregation and condensation protein A (242 aa).

The protein belongs to the ScpA family. Component of a cohesin-like complex composed of ScpA, ScpB and the Smc homodimer, in which ScpA and ScpB bind to the head domain of Smc. The presence of the three proteins is required for the association of the complex with DNA.

It localises to the cytoplasm. In terms of biological role, participates in chromosomal partition during cell division. May act via the formation of a condensin-like complex containing Smc and ScpB that pull DNA away from mid-cell into both cell halves. This is Segregation and condensation protein A from Streptococcus pneumoniae serotype 2 (strain D39 / NCTC 7466).